Here is a 185-residue protein sequence, read N- to C-terminus: Ribose 1,5-bisphosphate phosphokinase PhnN (185 aa).

Residue 10–17 (GPSGSGKD) participates in ATP binding.

This sequence belongs to the ribose 1,5-bisphosphokinase family.

It catalyses the reaction alpha-D-ribose 1,5-bisphosphate + ATP = 5-phospho-alpha-D-ribose 1-diphosphate + ADP. The protein operates within metabolic intermediate biosynthesis; 5-phospho-alpha-D-ribose 1-diphosphate biosynthesis; 5-phospho-alpha-D-ribose 1-diphosphate from D-ribose 5-phosphate (route II): step 3/3. Catalyzes the phosphorylation of ribose 1,5-bisphosphate to 5-phospho-D-ribosyl alpha-1-diphosphate (PRPP). The chain is Ribose 1,5-bisphosphate phosphokinase PhnN from Escherichia coli O157:H7.